Here is a 57-residue protein sequence, read N- to C-terminus: uncharacterized protein (57 aa).

This is an uncharacterized protein from Homo sapiens (Human).